The chain runs to 564 residues: Agglutinin (564 aa).

An N-terminal signal peptide occupies residues 1 to 24 (MYAVATWLCFGSTSGWSFTLEDNN). 32–34 (IIN) serves as a coordination point for beta-D-galactose. Residue asparagine 34 is glycosylated (N-linked (GlcNAc...) asparagine). Catalysis depends on residues tyrosine 104, tyrosine 147, glutamate 200, and arginine 203. Residues 104-105 (YV) and 145-147 (GNY) contribute to the AMP site. Asparagine 259 is a glycosylation site (N-linked (GlcNAc...) asparagine). An intrachain disulfide couples cysteine 282 to cysteine 306. The propeptide at 291–302 (SLLIRPVVPNFN) is linker peptide. The Ricin B-type lectin 1 domain maps to 309–436 (PEPIVRIVGR…YAVSQGWLPT (128 aa)). Residues isoleucine 312, 324 to 328 (DVTGE), glutamine 337, lysine 342, and asparagine 348 contribute to the beta-D-galactose site. One copy of the 1-alpha repeat lies at 319-361 (NGLCVDVTGEEFFDGNPIQLWPCKSNTDWNQLWTLRKDSTIRS). A disulfide bridge connects residues cysteine 322 and cysteine 341. A 1-beta repeat occupies 362 to 402 (NGKCLTISKSSPRQQVVIYNCSTATVGATRWQIWDNRTIIN). A disulfide bond links cysteine 365 and cysteine 382. N-linked (GlcNAc...) asparagine glycosylation is found at asparagine 397 and asparagine 437. The 1-gamma repeat unit spans residues 405-437 (SGLVLAATSGNSGTKLTVQTNIYAVSQGWLPTN). Position 437 (asparagine 437) interacts with beta-D-galactose. The Ricin B-type lectin 2 domain occupies 439–563 (TQPFVTTIVG…GNLNQIWLPL (125 aa)). The 2-alpha repeat unit spans residues 450–485 (YGMCLQANSGKVWLEDCTSEKAEQQWALYADGSIRP). Cystine bridges form between cysteine 453/cysteine 466 and cysteine 492/cysteine 509. The 2-beta repeat unit spans residues 489-528 (RDNCLTTDANIKGTVVKILSCGPASSGQRWMFKNDGTILN). A 2-gamma repeat occupies 531–558 (NGLVLDVRRSDPSLKQIIVHPFHGNLNQ).

This sequence in the N-terminal section; belongs to the ribosome-inactivating protein family. Type 2 RIP subfamily.

The catalysed reaction is Endohydrolysis of the N-glycosidic bond at one specific adenosine on the 28S rRNA.. This Ricinus communis (Castor bean) protein is Agglutinin.